Consider the following 73-residue polypeptide: Eukaryotic translation initiation factor 4 gamma 2 (73 aa).

The region spanning 1-70 is the W2 domain; it reads QVHCYNSNFP…ETAEEEESEE (70 aa).

This sequence belongs to the eukaryotic initiation factor 4G family. Interacts with the serine/threonine protein kinases MKNK1 and MKNK2. Binds EIF4A and EIF3. In terms of processing, phosphorylation; hyperphosphorylated during mitosis.

Appears to play a role in the switch from cap-dependent to IRES-mediated translation during mitosis, apoptosis and viral infection. Cleaved by some caspases and viral proteases. The chain is Eukaryotic translation initiation factor 4 gamma 2 (EIF4G2) from Gallus gallus (Chicken).